The chain runs to 164 residues: Anterior gradient protein 2 (164 aa).

The signal sequence occupies residues 1 to 20; that stretch reads METVLKTLFVLLVATSLTLA. Short sequence motifs (homodimer stabilization; interchain) lie at residues 34–43 and 49–56; these read SRGWGDNLEW and EGLYKAKT.

The protein belongs to the AGR family. As to quaternary structure, monomer and homodimer.

The protein resides in the secreted. The protein localises to the endoplasmic reticulum. In Xenopus tropicalis (Western clawed frog), this protein is Anterior gradient protein 2.